A 169-amino-acid chain; its full sequence is Cytochrome c oxidase subunit 4 isoform 1, mitochondrial (169 aa).

A mitochondrion-targeting transit peptide spans 1-22 (MLASRALSLIGKRAISTSVCLR). The Mitochondrial matrix portion of the chain corresponds to 23–99 (AHGSVVKSED…FAEMNRGTNE (77 aa)). Lys-29 is modified (N6-acetyllysine; alternate). An N6-succinyllysine; alternate modification is found at Lys-29. Phosphoserine occurs at positions 56 and 58. At Lys-60 the chain carries N6-acetyllysine; alternate. Lys-60 is subject to N6-succinyllysine; alternate. Lys-67 is modified (N6-acetyllysine). The helical transmembrane segment at 100-125 (WKTVVGMAMFFIGFTALVLIWEKSYV) threads the bilayer. Topologically, residues 126–169 (YGPIPHTFDRDWVAMQTKRMLDMKANPIQGFSAKWDYDKNEWKK) are mitochondrial intermembrane.

Belongs to the cytochrome c oxidase IV family. Component of the cytochrome c oxidase (complex IV, CIV), a multisubunit enzyme composed of 14 subunits. The complex is composed of a catalytic core of 3 subunits MT-CO1, MT-CO2 and MT-CO3, encoded in the mitochondrial DNA, and 11 supernumerary subunits COX4I, COX5A, COX5B, COX6A, COX6B, COX6C, COX7A, COX7B, COX7C, COX8 and NDUFA4, which are encoded in the nuclear genome. The complex exists as a monomer or a dimer and forms supercomplexes (SCs) in the inner mitochondrial membrane with NADH-ubiquinone oxidoreductase (complex I, CI) and ubiquinol-cytochrome c oxidoreductase (cytochrome b-c1 complex, complex III, CIII), resulting in different assemblies (supercomplex SCI(1)III(2)IV(1) and megacomplex MCI(2)III(2)IV(2)). Interacts with PHB2; the interaction decreases in absence of SPHK2. Interacts with AFG1L. Interacts with ABCB7; this interaction allows the regulation of cellular iron homeostasis and cellular reactive oxygen species (ROS) levels in cardiomyocytes. Interacts with FLVCR2; this interaction occurs in the absence of heme and is disrupted upon heme binding. Interacts with IRGC.

Its subcellular location is the mitochondrion inner membrane. It functions in the pathway energy metabolism; oxidative phosphorylation. In terms of biological role, component of the cytochrome c oxidase, the last enzyme in the mitochondrial electron transport chain which drives oxidative phosphorylation. The respiratory chain contains 3 multisubunit complexes succinate dehydrogenase (complex II, CII), ubiquinol-cytochrome c oxidoreductase (cytochrome b-c1 complex, complex III, CIII) and cytochrome c oxidase (complex IV, CIV), that cooperate to transfer electrons derived from NADH and succinate to molecular oxygen, creating an electrochemical gradient over the inner membrane that drives transmembrane transport and the ATP synthase. Cytochrome c oxidase is the component of the respiratory chain that catalyzes the reduction of oxygen to water. Electrons originating from reduced cytochrome c in the intermembrane space (IMS) are transferred via the dinuclear copper A center (CU(A)) of subunit 2 and heme A of subunit 1 to the active site in subunit 1, a binuclear center (BNC) formed by heme A3 and copper B (CU(B)). The BNC reduces molecular oxygen to 2 water molecules using 4 electrons from cytochrome c in the IMS and 4 protons from the mitochondrial matrix. This Mus musculus (Mouse) protein is Cytochrome c oxidase subunit 4 isoform 1, mitochondrial (Cox4i1).